The following is a 481-amino-acid chain: Neuronal acetylcholine receptor subunit eat-2 (481 aa).

The N-terminal stretch at 1–19 is a signal peptide; it reads MFLLLQILYILLFLNLADT. Over 20–235 the chain is Extracellular; the sequence is SDDEYRLLKD…MHLKRRTMYY (216 aa). Asn-93 is a glycosylation site (N-linked (GlcNAc...) asparagine). A disulfide bridge connects residues Cys-147 and Cys-161. Transmembrane regions (helical) follow at residues 236-256, 264-284, and 292-312; these read GLNW…GFTM, VTLQ…VSEV, and IPII…SICV. The Cytoplasmic portion of the chain corresponds to 313 to 443; sequence SLITVNIFYR…WRFMAMVIDR (131 aa). Residues 356 to 384 are disordered; that stretch reads KPKREKKKEEEEDEESNAGGKEEESELIS. Residues 444 to 464 form a helical membrane-spanning segment; it reads ASLFLFTGLIFGTTFVIFAAC.

This sequence belongs to the ligand-gated ion channel (TC 1.A.9) family. Acetylcholine receptor (TC 1.A.9.1) subfamily. As to quaternary structure, neuronal AChR seems to be composed of two different type of subunits: alpha and beta.

Its subcellular location is the postsynaptic cell membrane. The protein localises to the cell membrane. In terms of biological role, after binding acetylcholine, the AChR responds by an extensive change in conformation that affects all subunits and leads to opening of an ion-conducting channel across the plasma membrane. Nicotinic acetylcholine receptor in the MC pharyngeal motor neuron involved in pharyngeal pumping. Has a role in the determination of life span possibly via calorific restriction which affects growth rate, although this is independent of metabolic activity. The sequence is that of Neuronal acetylcholine receptor subunit eat-2 from Caenorhabditis briggsae.